The chain runs to 235 residues: MKFEPELESGKLIKRYKRFLADIKLEDNSERTIHCANTGAMTGCAEPDSTVFFSTSSNLKRKYPNSWELSVTENNHTICVNTLRANQLVVEAIQEQNIKELTEYDELKTEVKYGSENSRIDILLTGKSLPDCYIEVKSVTLLSESGQGFFPDAVTTRGQKHLRELSEMAQLGHKAVLFFAVLHSGIEKVSIAHHIDQQYHSLLIDAIENGVNILCYQAEMSSKEMKIVRKLPFSI.

The protein belongs to the SfsA family.

The polypeptide is Sugar fermentation stimulation protein homolog (Aliivibrio fischeri (strain MJ11) (Vibrio fischeri)).